A 62-amino-acid chain; its full sequence is MIEKGQEPKSRYMPIAFILEVYYTIFGPSIYCPECNTFWRGFYSQHMKYCHFCQTELQERKF.

This is an uncharacterized protein from His1 virus (isolate Australia/Victoria) (His1V).